We begin with the raw amino-acid sequence, 463 residues long: Nitrate/nitrite antiporter NarK (463 aa).

Residues 1–37 (MSHSSAPERATGAVITDWRPEDPAFWQQRGQRIASRN) are Cytoplasmic-facing. A helical transmembrane segment spans residues 38–59 (LWISVPCLLLAFCVWMLFSAVA). Residues 60-73 (VNLPKVGFNFTTDQ) lie on the Periplasmic side of the membrane. The chain crosses the membrane as a helical span at residues 74-95 (LFMLTALPSVSGALLRVPYSFM). Arg-89 provides a ligand contact to nitrate. Arg-89 provides a ligand contact to nitrite. The Cytoplasmic portion of the chain corresponds to 96 to 102 (VPIFGGR). The chain crosses the membrane as a helical span at residues 103-122 (RWTAFSTGILIIPCVWLGFA). The Periplasmic segment spans residues 123 to 130 (VQDTSTPY). A helical membrane pass occupies residues 131–151 (SVFIIISLLCGFAGANFASSM). Residues 152 to 166 (ANISFFFPKQKQGGA) are Cytoplasmic-facing. The chain crosses the membrane as a helical span at residues 167-189 (LGLNGGLGNMGVSVMQLVAPLVV). Position 175 (Asn-175) interacts with nitrate. Residues 190 to 211 (SLSIFAVFGSQGVKQPDGTELY) lie on the Periplasmic side of the membrane. A helical transmembrane segment spans residues 212 to 233 (LANASWIWVPFLAIFTIAAWFG). Residues 234–253 (MNDLATSKASIKEQLPVLKR) are Cytoplasmic-facing. Residues 254-281 (GHLWIMSLLYLATFGSFIGFSAGFAMLS) form a helical membrane-spanning segment. Tyr-263 lines the nitrate pocket. A nitrite-binding site is contributed by Tyr-263. Residues 282 to 289 (KTQFPDVQ) are Periplasmic-facing. Residues 290–312 (ILQYAFFGPFIGALARSAGGALS) form a helical membrane-spanning segment. The Cytoplasmic segment spans residues 313–316 (DRLG). A helical membrane pass occupies residues 317–338 (GTRVTLVNFILMAIFSGLLFLT). Over 339-347 (LPTDGQGGS) the chain is Periplasmic. A helical membrane pass occupies residues 348 to 373 (FMAFFAVFLALFLTAGLGSGSTFQMI). Over 374-405 (SVIFRKLTMDRVKAEGGSDERAMREAATDTAA) the chain is Cytoplasmic. A helical transmembrane segment spans residues 406-427 (ALGFISAIGAIGGFFIPKAFGS). Ser-411 contributes to the nitrate binding site. The Periplasmic portion of the chain corresponds to 428 to 435 (SLALTGSP). A helical transmembrane segment spans residues 436-458 (VGAMKVFLIFYIACVVITWAVYG). Residues 459–463 (RHSKK) are Cytoplasmic-facing.

This sequence belongs to the major facilitator superfamily. Nitrate/nitrite porter (TC 2.A.1.8) family.

Its subcellular location is the cell inner membrane. The enzyme catalyses nitrate(in) + nitrite(out) = nitrate(out) + nitrite(in). Catalyzes nitrate uptake, nitrite uptake and nitrite export across the cytoplasmic membrane. Functions as a nitrate/nitrite exchanger, and protons are unlikely to be co-transported. This Escherichia coli (strain K12) protein is Nitrate/nitrite antiporter NarK.